Here is a 288-residue protein sequence, read N- to C-terminus: MKLPIFIADAFTARAFRGNPAAVCLLENELDEDMHQKIAREMNLSETAFIRKLHPTDNFAQSSCFGLRWFTPASEVPLCGHATLASAAVLFHKIKNMNSTLTFVTLSGELRARRAEDGIVLDLPLYPAHPQDFHEVEDLIKTAIGNTLVQDICYSPDTQKLLVRLSDVYNRSFLENLKVNTENLLQVENTGKVKGLILTLKGEPGGQTQAFDFYSRYFAPWVGVAEDPVTGSAHAVLSSYWSQHLGKKEMHAFQCSHRGGELGISLRPDGRVDIRGGAAVVLEGTLTA.

Glutamate 46 is an active-site residue.

The protein belongs to the PhzF family. Interacts with UNRIP/MAWD.

This Homo sapiens (Human) protein is Phenazine biosynthesis-like domain-containing protein (PBLD).